The sequence spans 302 residues: tRNA pseudouridine synthase B (302 aa).

Aspartate 48 acts as the Nucleophile in catalysis.

Belongs to the pseudouridine synthase TruB family. Type 1 subfamily.

It catalyses the reaction uridine(55) in tRNA = pseudouridine(55) in tRNA. In terms of biological role, responsible for synthesis of pseudouridine from uracil-55 in the psi GC loop of transfer RNAs. This is tRNA pseudouridine synthase B from Xylella fastidiosa (strain Temecula1 / ATCC 700964).